Reading from the N-terminus, the 226-residue chain is Ribonuclease HII (226 aa).

Residues 24–216 form the RNase H type-2 domain; sequence QRLCGVDEAG…VRKVLERGMV (193 aa). Positions 30, 31, and 125 each coordinate a divalent metal cation.

It belongs to the RNase HII family. Mn(2+) serves as cofactor. Requires Mg(2+) as cofactor.

Its subcellular location is the cytoplasm. It catalyses the reaction Endonucleolytic cleavage to 5'-phosphomonoester.. Endonuclease that specifically degrades the RNA of RNA-DNA hybrids. The sequence is that of Ribonuclease HII from Cupriavidus metallidurans (strain ATCC 43123 / DSM 2839 / NBRC 102507 / CH34) (Ralstonia metallidurans).